The primary structure comprises 86 residues: Large ribosomal subunit protein uL23 (86 aa).

This sequence belongs to the universal ribosomal protein uL23 family. As to quaternary structure, part of the 50S ribosomal subunit. Contacts protein L29.

Its function is as follows. Binds to 23S rRNA. One of the proteins that surrounds the polypeptide exit tunnel on the outside of the ribosome. The protein is Large ribosomal subunit protein uL23 of Pyrococcus abyssi (strain GE5 / Orsay).